The chain runs to 252 residues: uncharacterized protein (252 aa).

10 consecutive repeat copies span residues 68–82 (TYNQ…DLVD), 83–97 (TYNQ…DLVD), 98–112 (TYNQ…DLVD), 113–127 (TYNQ…DLVD), 128–142 (TYNQ…DLVD), 143–157 (TYNQ…DLVD), 158–172 (TYNQ…DLID), 173–187 (TYNQ…DLVD), 188–202 (TYNQ…DLVD), and 203–217 (TYNQ…DLVD). The 13 X 15 AA tandem repeats stretch occupies residues 68–246 (TYNQSQNVCP…LIDTYNQSQN (179 aa)). Residues 218–230 (TYNQSQNVCPQDL) form an 11; truncated repeat. The stretch at 231–239 (NVYTQDLID) is one 12; truncated repeat. The stretch at 240–246 (TYNQSQN) is one 13; truncated repeat.

In terms of biological role, a protein probably derived from this gene is found in cuboidal crystalline inclusions, but is not toxic even when coexpressed with upstream ORF1. The protein runs anomalously as a 50 kDa band in gels. This is an uncharacterized protein from Bacillus thuringiensis subsp. kurstaki.